A 482-amino-acid chain; its full sequence is tRNA sulfurtransferase (482 aa).

The region spanning 61-165 is the THUMP domain; it reads LAIRDALTRI…DDRLLLIKGR (105 aa). ATP-binding positions include 183–184, lysine 265, glycine 287, and glutamine 296; that span reads LI. Cysteine 344 and cysteine 456 form a disulfide bridge. Positions 404-482 constitute a Rhodanese domain; it reads FGANDVILDI…GFANVKVYRP (79 aa). Cysteine 456 serves as the catalytic Cysteine persulfide intermediate.

Belongs to the ThiI family.

Its subcellular location is the cytoplasm. The enzyme catalyses [ThiI sulfur-carrier protein]-S-sulfanyl-L-cysteine + a uridine in tRNA + 2 reduced [2Fe-2S]-[ferredoxin] + ATP + H(+) = [ThiI sulfur-carrier protein]-L-cysteine + a 4-thiouridine in tRNA + 2 oxidized [2Fe-2S]-[ferredoxin] + AMP + diphosphate. The catalysed reaction is [ThiS sulfur-carrier protein]-C-terminal Gly-Gly-AMP + S-sulfanyl-L-cysteinyl-[cysteine desulfurase] + AH2 = [ThiS sulfur-carrier protein]-C-terminal-Gly-aminoethanethioate + L-cysteinyl-[cysteine desulfurase] + A + AMP + 2 H(+). The protein operates within cofactor biosynthesis; thiamine diphosphate biosynthesis. Its function is as follows. Catalyzes the ATP-dependent transfer of a sulfur to tRNA to produce 4-thiouridine in position 8 of tRNAs, which functions as a near-UV photosensor. Also catalyzes the transfer of sulfur to the sulfur carrier protein ThiS, forming ThiS-thiocarboxylate. This is a step in the synthesis of thiazole, in the thiamine biosynthesis pathway. The sulfur is donated as persulfide by IscS. This chain is tRNA sulfurtransferase, found in Salmonella arizonae (strain ATCC BAA-731 / CDC346-86 / RSK2980).